The chain runs to 289 residues: ATP synthase gamma chain (289 aa).

The protein belongs to the ATPase gamma chain family. F-type ATPases have 2 components, CF(1) - the catalytic core - and CF(0) - the membrane proton channel. CF(1) has five subunits: alpha(3), beta(3), gamma(1), delta(1), epsilon(1). CF(0) has three main subunits: a, b and c.

It is found in the cell inner membrane. Functionally, produces ATP from ADP in the presence of a proton gradient across the membrane. The gamma chain is believed to be important in regulating ATPase activity and the flow of protons through the CF(0) complex. This is ATP synthase gamma chain from Polynucleobacter necessarius subsp. necessarius (strain STIR1).